An 862-amino-acid chain; its full sequence is Rab GTPase-binding effector protein 1 (862 aa).

Alanine 2 carries the N-acetylalanine modification. Residues 11–328 (DVSLQQRVAE…KDQEEDEQQR (318 aa)) are a coiled coil. Lysine 282 carries the post-translational modification N6-acetyllysine. Disordered regions lie at residues 315–340 (ELKK…KIDT) and 355–374 (EESS…THGS). Residues serine 374, serine 377, and serine 407 each carry the phosphoserine modification. The residue at position 408 (threonine 408) is a Phosphothreonine. Serine 410 is subject to Phosphoserine. A coiled-coil region spans residues 534–816 (DMCSNYEKQL…LQTELDVSEQ (283 aa)).

It belongs to the rabaptin family. Heterodimer with RABGEF1. The heterodimer binds RAB4A and RAB5A that have been activated by GTP-binding. Interacts with TSC2. Interacts with GGA1 (via GAE domain), GGA2 (via GAE domain) and GGA3 (via GAE domain). Interacts with AP1G1 (via GAE domain). Interacts with AP1G2 (via GAE domain). Interacts with ECPAS. Interacts with KCNH1. Interacts with PKD1 (via C-terminal domain) and GGA1; the interactions recruit PKD1:PKD2 complex to GGA1 and ARL3 at trans-Golgi network. Interacts with KCNH1. In terms of processing, proteolytic cleavage by caspases in apoptotic cells causes loss of endosome fusion activity.

It is found in the cytoplasm. The protein resides in the early endosome. The protein localises to the recycling endosome. It localises to the cytoplasmic vesicle. In terms of biological role, rab effector protein acting as linker between gamma-adaptin, RAB4A and RAB5A. Involved in endocytic membrane fusion and membrane trafficking of recycling endosomes. Involved in KCNH1 channels trafficking to and from the cell membrane. Stimulates RABGEF1 mediated nucleotide exchange on RAB5A. Mediates the traffic of PKD1:PKD2 complex from the endoplasmic reticulum through the Golgi to the cilium. This Rattus norvegicus (Rat) protein is Rab GTPase-binding effector protein 1 (Rabep1).